Consider the following 507-residue polypeptide: Protein adenylyltransferase fic-1 (507 aa).

A helical membrane pass occupies residues 40–56; sequence YSLTTVVLVSLVVTLVC. TPR repeat units lie at residues 146–179 and 180–213; these read AILAAKAASRSRRDGNLERAVTIMEHAMALAPNN and PQILIEMGQIREMHNELVEADQCYVKALAYDPGN. Positions 269–274 match the Inhibitory (S/T)XXXE(G/N) motif motif; that stretch reads TVAIEG. E273 is an ATP binding site. The Fido domain maps to 325–460; that stretch reads ISIDDILEMH…LRPFVRYVAK (136 aa). An O-AMP-threonine; by autocatalysis modification is found at T351. 356-359 contributes to the ATP binding site; the sequence is VGKF. The active site involves H403. ATP is bound by residues 407 to 414, 439 to 440, and N447; these read DGNGRTAR and YY. T475 bears the O-AMP-threonine; by autocatalysis mark. The disordered stretch occupies residues 482–507; the sequence is NGEEPNLTAEESKVSEKIETECRAGS. The segment covering 491–507 has biased composition (basic and acidic residues); it reads EESKVSEKIETECRAGS.

It belongs to the fic family. As to quaternary structure, forms homodimers; homodimerization might be required for adenylyltransferase activity.

It is found in the endoplasmic reticulum membrane. It localises to the nucleus membrane. It carries out the reaction L-tyrosyl-[protein] + ATP = O-(5'-adenylyl)-L-tyrosyl-[protein] + diphosphate. The enzyme catalyses L-threonyl-[protein] + ATP = 3-O-(5'-adenylyl)-L-threonyl-[protein] + diphosphate. It catalyses the reaction 3-O-(5'-adenylyl)-L-threonyl-[protein] + H2O = L-threonyl-[protein] + AMP + H(+). Its activity is regulated as follows. The side chain of Glu-273 determines which of the two opposing activities (AMPylase or de-AMPylase) will take place. In response to endoplasmic reticulum stress, mediates de-AMPylase activity. Adenylyltransferase activity is inhibited by the inhibitory helix present at the N-terminus: Glu-273 binds ATP and competes with ATP-binding at Arg-414, thereby preventing adenylyltransferase activity. In unstressed cells, disengagement of Glu-273 promotes adenylyltransferase activity. Activation dissociates ATP-binding from Glu-273, allowing ordered binding of the entire ATP moiety with the alpha-phosphate in an orientation that is productive for accepting an incoming target hydroxyl side chain. Protein that can both mediate the addition of adenosine 5'-monophosphate (AMP) to specific residues of target proteins (AMPylation), and the removal of the same modification from target proteins (de-AMPylation), depending on the context. The side chain of Glu-273 determines which of the two opposing activities (AMPylase or de-AMPylase) will take place. Adenylyltransferase that mediates the addition of adenosine 5'-monophosphate (AMP) to specific residues of target proteins. In vivo target proteins include the heat-shock 70 family proteins hsp-1 and hsp-3 and the translation elongation factors eef-1A, eef-1G and eef-2. Can AMPylate core histone H3 in vitro. Can also act as a phosphodiesterase by mediating removal of ATP (de-AMPylation) from target proteins. Decreases susceptibility to P.aeruginosa-mediated killing and might therefore play a role in the innate immune response. This chain is Protein adenylyltransferase fic-1 (fic-1), found in Caenorhabditis briggsae.